Consider the following 611-residue polypeptide: Conglutin beta 1 (611 aa).

The signal sequence occupies residues 1 to 30 (MAKMRVRLPMLILLLGVVFLLAASIGIAYG). Basic and acidic residues-rich tracts occupy residues 32 to 82 (KDFT…RSQS) and 130 to 141 (SRREEREEREQE). Disordered regions lie at residues 32–194 (KDFT…NRFQ) and 384–407 (LRKHAQSSSGEGKPSESGPFNLRS). The span at 142–151 (QGSSSGSQRG) shows a compositional bias: low complexity. Over residues 152-181 (SGDERRQHRERRVHREEREQEQDSRSDSRR) the composition is skewed to basic and acidic residues. The Cupin type-1 1 domain maps to 186 to 344 (YHFSSNRFQT…TFNTRYEEIE (159 aa)). Positions 390–402 (SSSGEGKPSESGP) are enriched in low complexity. Residues 403 to 569 (FNLRSNKPIY…TFPGSIEDVE (167 aa)) enclose the Cupin type-1 2 domain. N434 carries an N-linked (GlcNAc...) asparagine glycan. Residues 476-495 (DQQRQQDEQEEEYEQGEEEV) are disordered. The span at 483 to 492 (EQEEEYEQGE) shows a compositional bias: acidic residues. N519 carries an N-linked (GlcNAc...) asparagine glycan. Low complexity predominate over residues 580–589 (FANAQPQQQQ). Residues 580 to 600 (FANAQPQQQQQREKEGRRGRR) form a disordered region.

This sequence belongs to the 7S seed storage protein family. In terms of assembly, component of globulins complexes which accumulate in seeds.

In terms of biological role, seed storage protein. Accumulates during seed development and is hydrolyzed after germination to provide a carbon and nitrogen source for the developing seedling. The protein is Conglutin beta 1 of Lupinus angustifolius (Narrow-leaved blue lupine).